Here is a 268-residue protein sequence, read N- to C-terminus: Tryptophan synthase alpha chain (268 aa).

Residues E49 and D60 each act as proton acceptor in the active site.

This sequence belongs to the TrpA family. Tetramer of two alpha and two beta chains.

It catalyses the reaction (1S,2R)-1-C-(indol-3-yl)glycerol 3-phosphate + L-serine = D-glyceraldehyde 3-phosphate + L-tryptophan + H2O. Its pathway is amino-acid biosynthesis; L-tryptophan biosynthesis; L-tryptophan from chorismate: step 5/5. In terms of biological role, the alpha subunit is responsible for the aldol cleavage of indoleglycerol phosphate to indole and glyceraldehyde 3-phosphate. This Pseudomonas aeruginosa (strain ATCC 15692 / DSM 22644 / CIP 104116 / JCM 14847 / LMG 12228 / 1C / PRS 101 / PAO1) protein is Tryptophan synthase alpha chain.